The primary structure comprises 213 residues: Ribonuclease HII (213 aa).

Residues 2–213 (GRVAGIDEAG…KEWATWKRLR (212 aa)) enclose the RNase H type-2 domain. A divalent metal cation-binding residues include D8, E9, and D113.

Belongs to the RNase HII family. The cofactor is Mn(2+). Requires Mg(2+) as cofactor.

The protein resides in the cytoplasm. The enzyme catalyses Endonucleolytic cleavage to 5'-phosphomonoester.. Its function is as follows. Endonuclease that specifically degrades the RNA of RNA-DNA hybrids. The sequence is that of Ribonuclease HII from Thermofilum pendens (strain DSM 2475 / Hrk 5).